Here is a 59-residue protein sequence, read N- to C-terminus: DNA gyrase inhibitor YacG (59 aa).

Residues Cys-9, Cys-12, Cys-27, and Cys-31 each coordinate Zn(2+).

Belongs to the DNA gyrase inhibitor YacG family. In terms of assembly, interacts with GyrB. Requires Zn(2+) as cofactor.

In terms of biological role, inhibits all the catalytic activities of DNA gyrase by preventing its interaction with DNA. Acts by binding directly to the C-terminal domain of GyrB, which probably disrupts DNA binding by the gyrase. The sequence is that of DNA gyrase inhibitor YacG from Geotalea daltonii (strain DSM 22248 / JCM 15807 / FRC-32) (Geobacter daltonii).